A 449-amino-acid chain; its full sequence is Glutamyl-tRNA reductase (449 aa).

Substrate-binding positions include 58-61 (TCNR), Ser-121, 126-128 (ETQ), and Gln-132. Cys-59 (nucleophile) is an active-site residue. 203-208 (GLGEMA) contacts NADP(+).

Belongs to the glutamyl-tRNA reductase family. As to quaternary structure, homodimer.

The catalysed reaction is (S)-4-amino-5-oxopentanoate + tRNA(Glu) + NADP(+) = L-glutamyl-tRNA(Glu) + NADPH + H(+). The protein operates within porphyrin-containing compound metabolism; protoporphyrin-IX biosynthesis; 5-aminolevulinate from L-glutamyl-tRNA(Glu): step 1/2. Its function is as follows. Catalyzes the NADPH-dependent reduction of glutamyl-tRNA(Glu) to glutamate 1-semialdehyde (GSA). This chain is Glutamyl-tRNA reductase, found in Helicobacter pylori (strain Shi470).